The chain runs to 324 residues: Aldo-keto reductase family 1 member A1 (324 aa).

Phosphoserine is present on Ser-3. NADP(+)-binding positions include 10–19 (GQKMPLIGLG), Thr-20, and Trp-21. Ser-37 carries the post-translational modification Phosphoserine. Asp-44 serves as a coordination point for NADP(+). Catalysis depends on Tyr-49, which acts as the Proton donor. Position 126 is an N6-acetyllysine; alternate (Lys-126). Lys-126 carries the N6-succinyllysine; alternate modification. Lys-144 bears the N6-succinyllysine mark. NADP(+)-binding residues include Ser-161, Asn-162, Ser-210, Leu-212, Ser-214, Ser-215, Lys-262, Ser-263, Ile-264, Thr-265, Arg-268, Gln-271, and Asn-272. Position 210 is a phosphoserine (Ser-210).

The protein belongs to the aldo/keto reductase family.

It is found in the cytoplasm. Its subcellular location is the cytosol. It localises to the apical cell membrane. The catalysed reaction is a primary alcohol + NADP(+) = an aldehyde + NADPH + H(+). It carries out the reaction L-gulonate + NADP(+) = aldehydo-D-glucuronate + NADPH + H(+). It catalyses the reaction L-gulono-1,4-lactone + NADP(+) = D-glucurono-3,6-lactone + NADPH + H(+). The enzyme catalyses allyl alcohol + NADP(+) = acrolein + NADPH + H(+). The catalysed reaction is glycerol + NADP(+) = D-glyceraldehyde + NADPH + H(+). It carries out the reaction glycerol + NADP(+) = L-glyceraldehyde + NADPH + H(+). It catalyses the reaction hydroxyacetone + NADP(+) = methylglyoxal + NADPH + H(+). The enzyme catalyses 3-deoxyfructose + NADP(+) = 3-deoxyglucosone + NADPH + H(+). The catalysed reaction is (R)-mevalonate + NADP(+) = (R)-mevaldate + NADPH + H(+). It carries out the reaction S-nitroso-CoA + NADPH + H(+) = sulfinamide-CoA + NADP(+). It catalyses the reaction S-nitrosoglutathione + NADPH + H(+) = S-(hydroxysulfenamide)glutathione + NADP(+). Functionally, catalyzes the NADPH-dependent reduction of a wide variety of carbonyl-containing compounds to their corresponding alcohols. Displays enzymatic activity towards endogenous metabolites such as aromatic and aliphatic aldehydes, ketones, monosaccharides and bile acids, with a preference for negatively charged substrates, such as glucuronate and succinic semialdehyde. Plays an important role by catalyzing the reduction of D-glucuronic acid and D-glucurono-gamma-lactone. Functions as a detoxifiying enzyme by reducing a range of toxic aldehydes. Reduces methylglyoxal and 3-deoxyglucosone, which are present at elevated levels under hyperglycemic conditions and are cytotoxic. Involved also in the detoxification of lipid-derived aldehydes like acrolein. Plays a role in the activation of procarcinogens, such as polycyclic aromatic hydrocarbon trans-dihydrodiols, and in the metabolism of various xenobiotics and drugs. Also acts as an inhibitor of protein S-nitrosylation by mediating degradation of S-nitroso-coenzyme A (S-nitroso-CoA), a cofactor required to S-nitrosylate proteins. S-nitroso-CoA reductase activity is involved in reprogramming intermediary metabolism in renal proximal tubules, notably by inhibiting protein S-nitrosylation of isoform 2 of PKM (PKM2). Also acts as a S-nitroso-glutathione reductase by catalyzing the NADPH-dependent reduction of S-nitrosoglutathione. Displays no reductase activity towards retinoids. The protein is Aldo-keto reductase family 1 member A1 (AKR1A1) of Cricetulus griseus (Chinese hamster).